Consider the following 462-residue polypeptide: Alkaline phosphatase 3 (462 aa).

The signal sequence occupies residues 1–32 (MKKFPKKLLPIAVLSSIAFSSLASGSVPEASA). Position 52 (Asp52) interacts with Mg(2+). A Zn(2+)-binding site is contributed by Asp52. Residue Ser101 is the Phosphoserine intermediate of the active site. Mg(2+) is bound by residues Thr154 and Glu275. Residues Asp280, His284, Asp322, His323, and His419 each coordinate Zn(2+).

Belongs to the alkaline phosphatase family. As to quaternary structure, monomer. The cofactor is Mg(2+). It depends on Zn(2+) as a cofactor.

The enzyme catalyses a phosphate monoester + H2O = an alcohol + phosphate. This chain is Alkaline phosphatase 3 (phoB), found in Bacillus subtilis (strain 168).